Here is a 367-residue protein sequence, read N- to C-terminus: Alanine racemase (367 aa).

Residue K35 is the Proton acceptor; specific for D-alanine of the active site. N6-(pyridoxal phosphate)lysine is present on K35. Residue R130 coordinates substrate. The active-site Proton acceptor; specific for L-alanine is the Y258. Position 306 (M306) interacts with substrate.

The protein belongs to the alanine racemase family. Pyridoxal 5'-phosphate serves as cofactor.

It catalyses the reaction L-alanine = D-alanine. The protein operates within amino-acid biosynthesis; D-alanine biosynthesis; D-alanine from L-alanine: step 1/1. Functionally, catalyzes the interconversion of L-alanine and D-alanine. May also act on other amino acids. The sequence is that of Alanine racemase (alr) from Acinetobacter baumannii (strain SDF).